A 187-amino-acid chain; its full sequence is Large ribosomal subunit protein uL5 (187 aa).

Belongs to the universal ribosomal protein uL5 family. Part of the 50S ribosomal subunit; part of the 5S rRNA/L5/L18/L25 subcomplex. Contacts the 5S rRNA and the P site tRNA. Forms a bridge to the 30S subunit in the 70S ribosome.

This is one of the proteins that bind and probably mediate the attachment of the 5S RNA into the large ribosomal subunit, where it forms part of the central protuberance. In the 70S ribosome it contacts protein S13 of the 30S subunit (bridge B1b), connecting the 2 subunits; this bridge is implicated in subunit movement. Contacts the P site tRNA; the 5S rRNA and some of its associated proteins might help stabilize positioning of ribosome-bound tRNAs. The polypeptide is Large ribosomal subunit protein uL5 (Mycobacterium avium (strain 104)).